The following is a 932-amino-acid chain: Lon protease homolog 2, peroxisomal (932 aa).

Positions 11 to 260 constitute a Lon N-terminal domain; it reads LSLVPLPKGS…RVVDILNKQN (250 aa). A disordered region spans residues 298–328; sequence RRGIPGASGTPPPGLGGRNNEADEKESNELD. Positions 317–328 are enriched in basic and acidic residues; that stretch reads NEADEKESNELD. 486-493 is an ATP binding site; that stretch reads GPPGTGKT. A Lon proteolytic domain is found at 729–916; that stretch reads HGRPGVVTGL…WEAIRHIWPD (188 aa). Active-site residues include serine 822 and lysine 865. A Microbody targeting signal motif is present at residues 930–932; it reads SRL.

Belongs to the peptidase S16 family.

The protein localises to the peroxisome matrix. It carries out the reaction Hydrolysis of proteins in presence of ATP.. Functionally, ATP-dependent serine protease that mediates the selective degradation of misfolded and unassembled polypeptides in the peroxisomal matrix. Necessary for type 2 peroxisome targeting signal (PTS2)-containing protein processing and facilitates peroxisome matrix protein import. This chain is Lon protease homolog 2, peroxisomal, found in Emericella nidulans (strain FGSC A4 / ATCC 38163 / CBS 112.46 / NRRL 194 / M139) (Aspergillus nidulans).